The sequence spans 248 residues: tRNA1(Val) (adenine(37)-N6)-methyltransferase (248 aa).

It belongs to the methyltransferase superfamily. tRNA (adenine-N(6)-)-methyltransferase family.

The protein resides in the cytoplasm. It catalyses the reaction adenosine(37) in tRNA1(Val) + S-adenosyl-L-methionine = N(6)-methyladenosine(37) in tRNA1(Val) + S-adenosyl-L-homocysteine + H(+). In terms of biological role, specifically methylates the adenine in position 37 of tRNA(1)(Val) (anticodon cmo5UAC). The protein is tRNA1(Val) (adenine(37)-N6)-methyltransferase of Yersinia pseudotuberculosis serotype O:1b (strain IP 31758).